A 227-amino-acid polypeptide reads, in one-letter code: Uracil-DNA glycosylase (227 aa).

Aspartate 64 acts as the Proton acceptor in catalysis.

This sequence belongs to the uracil-DNA glycosylase (UDG) superfamily. UNG family.

The protein resides in the cytoplasm. The catalysed reaction is Hydrolyzes single-stranded DNA or mismatched double-stranded DNA and polynucleotides, releasing free uracil.. Functionally, excises uracil residues from the DNA which can arise as a result of misincorporation of dUMP residues by DNA polymerase or due to deamination of cytosine. The polypeptide is Uracil-DNA glycosylase (Alkaliphilus metalliredigens (strain QYMF)).